Reading from the N-terminus, the 159-residue chain is Probable minor fimbrial protein (159 aa).

Residues 1–6 (MKKMHG) constitute a propeptide, leader sequence. Phe-7 is modified (N-methylphenylalanine). The helical transmembrane segment at 7–27 (FTLIELMIVVAIIGVLASTAL) threads the bilayer. Cystine bridges form between Cys-56-Cys-71 and Cys-140-Cys-153.

Belongs to the N-Me-Phe pilin family. The pili are polar flexible filaments of about 5.4 nanometers diameter and 2.5 micrometers average length; they consist of only a single polypeptide chain arranged in a helical configuration of five subunits per turn in the assembled pilus.

Its subcellular location is the fimbrium. It is found in the membrane. The sequence is that of Probable minor fimbrial protein (fimZ) from Dichelobacter nodosus (Bacteroides nodosus).